The chain runs to 283 residues: Urease accessory protein UreD (283 aa).

This sequence belongs to the UreD family. In terms of assembly, ureD, UreF and UreG form a complex that acts as a GTP-hydrolysis-dependent molecular chaperone, activating the urease apoprotein by helping to assemble the nickel containing metallocenter of UreC. The UreE protein probably delivers the nickel.

It localises to the cytoplasm. Its function is as follows. Required for maturation of urease via the functional incorporation of the urease nickel metallocenter. This is Urease accessory protein UreD from Rhodopseudomonas palustris (strain BisB5).